Reading from the N-terminus, the 909-residue chain is E3 ubiquitin-protein ligase HACE1 (909 aa).

The segment at 1–21 (MERAMEQLNRLTRSLRRARTV) is N-terminal helix important for homodimerization. ANK repeat units follow at residues 23 to 55 (LPDD…NSKF), 64 to 93 (VKRS…NPNY), 97 to 126 (SGCT…DVNI), 130 to 159 (EGLT…DVDV), 163 to 192 (MGQT…DINR), 196 to 226 (SGAT…YLSD), and 228 to 253 (NGVT…QYHP). The segment at 396 to 433 (KGQDQDGTSIPPFEPPGPGSYENLSTGTGESKPDVLGG) is disordered. Positions 574-909 (NCAKLKQGIA…HCGSYGYTMA (336 aa)) constitute an HECT domain. Cys876 acts as the Glycyl thioester intermediate in catalysis.

Homodimer. The homodimer is autoinhibited and stabilized by its N-terminal helix. Interacts with RAB1 (RAB1A, RAB1B or RAB1C), RAB4 (RAB4A or RAB4B) and RAB11 (RAB11A or RAB11B); in a GTP-dependent manner. Interacts with the 26S proteasomal complex through the 20S core proteasomal subunit. Interacts with RARB. Autoubiquitinated.

It localises to the golgi apparatus. Its subcellular location is the golgi stack membrane. The protein localises to the cytoplasm. It is found in the endoplasmic reticulum. The catalysed reaction is S-ubiquitinyl-[E2 ubiquitin-conjugating enzyme]-L-cysteine + [acceptor protein]-L-lysine = [E2 ubiquitin-conjugating enzyme]-L-cysteine + N(6)-ubiquitinyl-[acceptor protein]-L-lysine.. It participates in protein modification; protein ubiquitination. Functionally, E3 ubiquitin-protein ligase involved in Golgi membrane fusion and regulation of small GTPases. Acts as a regulator of Golgi membrane dynamics during the cell cycle: recruited to Golgi membrane by Rab proteins and regulates postmitotic Golgi membrane fusion. Acts by mediating ubiquitination during mitotic Golgi disassembly, ubiquitination serving as a signal for Golgi reassembly later, after cell division. Specifically binds GTP-bound RAC1, mediating ubiquitination and subsequent degradation of active RAC1, thereby playing a role in host defense against pathogens. May also act as a transcription regulator via its interaction with RARB. The protein is E3 ubiquitin-protein ligase HACE1 (HACE1) of Bos taurus (Bovine).